The chain runs to 212 residues: Ribosomal RNA small subunit methyltransferase G (212 aa).

S-adenosyl-L-methionine-binding positions include Gly-80, Leu-85, 131 to 132 (AE), and Arg-146.

This sequence belongs to the methyltransferase superfamily. RNA methyltransferase RsmG family.

The protein resides in the cytoplasm. The catalysed reaction is guanosine(527) in 16S rRNA + S-adenosyl-L-methionine = N(7)-methylguanosine(527) in 16S rRNA + S-adenosyl-L-homocysteine. Specifically methylates the N7 position of guanine in position 527 of 16S rRNA. The chain is Ribosomal RNA small subunit methyltransferase G from Xanthomonas axonopodis pv. citri (strain 306).